Reading from the N-terminus, the 185-residue chain is Lactoylglutathione lyase (185 aa).

The disordered stretch occupies residues 1–22 (MASEARESPANNPGLSTNRDEA). Residues 27 to 174 (IMQQTMFRIK…DGYWIEIFDL (148 aa)) enclose the VOC domain. Residues Gln30 and Arg34 each contribute to the substrate site. Gln30 serves as a coordination point for Zn(2+). Glu96 provides a ligand contact to Zn(2+). Substrate is bound by residues Asn100, Arg120, His124, and 154–155 (KM). Residue His124 coordinates Zn(2+). Zn(2+) is bound at residue Glu170. The active-site Proton donor/acceptor is Glu170.

The protein belongs to the glyoxalase I family. Requires Zn(2+) as cofactor.

It catalyses the reaction (R)-S-lactoylglutathione = methylglyoxal + glutathione. Its pathway is secondary metabolite metabolism; methylglyoxal degradation; (R)-lactate from methylglyoxal: step 1/2. In terms of biological role, catalyzes the conversion of hemimercaptal, formed from methylglyoxal and glutathione, to S-lactoylglutathione. In Arabidopsis thaliana (Mouse-ear cress), this protein is Lactoylglutathione lyase.